The chain runs to 967 residues: Isoleucine--tRNA ligase (967 aa).

A 'HIGH' region motif is present at residues Pro68 to His78. Glu583 provides a ligand contact to L-isoleucyl-5'-AMP. The 'KMSKS' region signature appears at Lys624–Ser628. Lys627 serves as a coordination point for ATP. Zn(2+) is bound by residues Cys937, Cys940, Cys957, and Cys960.

It belongs to the class-I aminoacyl-tRNA synthetase family. IleS type 1 subfamily. Monomer. Requires Zn(2+) as cofactor.

The protein localises to the cytoplasm. The enzyme catalyses tRNA(Ile) + L-isoleucine + ATP = L-isoleucyl-tRNA(Ile) + AMP + diphosphate. Catalyzes the attachment of isoleucine to tRNA(Ile). As IleRS can inadvertently accommodate and process structurally similar amino acids such as valine, to avoid such errors it has two additional distinct tRNA(Ile)-dependent editing activities. One activity is designated as 'pretransfer' editing and involves the hydrolysis of activated Val-AMP. The other activity is designated 'posttransfer' editing and involves deacylation of mischarged Val-tRNA(Ile). In Prochlorococcus marinus (strain NATL2A), this protein is Isoleucine--tRNA ligase.